An 88-amino-acid polypeptide reads, in one-letter code: Phage-like element PBSX protein XkdR (88 aa).

This sequence to B.subtilis YqbR.

The chain is Phage-like element PBSX protein XkdR (xkdR) from Bacillus subtilis (strain 168).